Here is a 1109-residue protein sequence, read N- to C-terminus: Hybrid signal transduction histidine kinase F (1109 aa).

Residues 237–289 (LSTETTITKKNGEKYPAEVFVKEISDIHSNSIGIMIIVRDITDQIRLKEMNIE) form the PAC domain. Positions 324–547 (TISHEIRTPL…LFSVTLNFEQ (224 aa)) constitute a Histidine kinase domain. His-327 carries the phosphohistidine; by autocatalysis modification. A coiled-coil region spans residues 719 to 760 (SNLIQTISQIDNQQQQQQQQLQQQEQEQQHQQQQLQQEQQFV). Low complexity predominate over residues 739-758 (LQQQEQEQQHQQQQLQQEQQ). Positions 739–819 (LQQQEQEQQH…TSSDSGESDE (81 aa)) are disordered. The segment covering 767 to 782 (DSSEKKTTPKKDRGKY) has biased composition (basic and acidic residues). Residues 928-1048 (RILLVDDNAV…PLGELVKKYL (121 aa)) enclose the Response regulatory domain. At Asp-977 the chain carries 4-aspartylphosphate. Residues 1052 to 1099 (NNNNNNNNNNNNNNNNNSNNNNSNSNSNPNSNSNSNSNSNSNPNQNPN) are compositionally biased toward low complexity. The tract at residues 1052–1109 (NNNNNNNNNNNNNNNNNSNNNNSNSNSNPNSNSNSNSNSNSNPNQNPNYCNNLPTDFI) is disordered. Over residues 1100–1109 (YCNNLPTDFI) the composition is skewed to polar residues.

The catalysed reaction is ATP + protein L-histidine = ADP + protein N-phospho-L-histidine.. Acts as a receptor histidine kinase for a signal transduction pathway. This protein undergoes an ATP-dependent autophosphorylation at a conserved histidine residue in the kinase core, and a phosphoryl group is then transferred to a conserved aspartate residue in the receiver domain. In Dictyostelium discoideum (Social amoeba), this protein is Hybrid signal transduction histidine kinase F (dhkF).